A 554-amino-acid polypeptide reads, in one-letter code: Valerianol synthase TPS1F (554 aa).

Residues aspartate 307 and aspartate 311 each coordinate Mg(2+). Positions 326-330 (VQRWD) match the DDXXD motif motif. Mg(2+) contacts are provided by aspartate 452, serine 456, and glutamate 460.

Belongs to the terpene synthase family. Mg(2+) serves as cofactor.

It carries out the reaction (2E,6E)-farnesyl diphosphate + H2O = valerianol + diphosphate. It participates in secondary metabolite biosynthesis; terpenoid biosynthesis. Terpene synthase that catalyzes the biosynthesis of the terpene valerianol, which is a volatile compound of floral scent. The chain is Valerianol synthase TPS1F from Camellia hiemalis (Camellia).